Here is a 537-residue protein sequence, read N- to C-terminus: CWF19-like protein 1 (537 aa).

The segment at lysine 297–proline 323 is disordered.

This sequence belongs to the CWF19 family.

This Mus musculus (Mouse) protein is CWF19-like protein 1 (Cwf19l1).